A 40-amino-acid polypeptide reads, in one-letter code: Cytolysin EnT (40 aa).

A plays an important role in the hemolytic activity region spans residues 3–12; that stretch reads ALAGTIIEGA. An N-terminal region region spans residues 11–30; the sequence is GASLTFSVLTTILDALGSVS.

Belongs to the actinoporin family. Sea anemone subfamily. As to quaternary structure, octamer or nonamer in membranes. Monomer in the soluble state.

The protein resides in the secreted. Its subcellular location is the nematocyst. The protein localises to the target cell membrane. Functionally, pore-forming protein that forms cations-selective hydrophilic pores of around 1 nm and causes cytolysis. Pore formation is a multi-step process that involves specific recognition of membrane sphingomyelin (but neither cholesterol nor phosphatidylcholine) using aromatic rich region and adjacent phosphocholine (POC) binding site, firm binding to the membrane (mainly driven by hydrophobic interactions) accompanied by the transfer of the N-terminal region to the lipid-water interface and finally pore formation after oligomerization of monomers. This toxin shows hemolytic activities. This Entacmaea quadricolor (Bubble-tip anemone) protein is Cytolysin EnT.